A 208-amino-acid polypeptide reads, in one-letter code: 3-isopropylmalate dehydratase small subunit (208 aa).

Belongs to the LeuD family. LeuD type 1 subfamily. As to quaternary structure, heterodimer of LeuC and LeuD.

It carries out the reaction (2R,3S)-3-isopropylmalate = (2S)-2-isopropylmalate. It participates in amino-acid biosynthesis; L-leucine biosynthesis; L-leucine from 3-methyl-2-oxobutanoate: step 2/4. Catalyzes the isomerization between 2-isopropylmalate and 3-isopropylmalate, via the formation of 2-isopropylmaleate. The sequence is that of 3-isopropylmalate dehydratase small subunit from Gluconobacter oxydans (strain 621H) (Gluconobacter suboxydans).